Reading from the N-terminus, the 354-residue chain is Ferrochelatase (354 aa).

Fe cation-binding residues include histidine 204 and glutamate 306.

Belongs to the ferrochelatase family.

It localises to the cytoplasm. It carries out the reaction heme b + 2 H(+) = protoporphyrin IX + Fe(2+). It participates in porphyrin-containing compound metabolism; protoheme biosynthesis; protoheme from protoporphyrin-IX: step 1/1. Its function is as follows. Catalyzes the ferrous insertion into protoporphyrin IX. This chain is Ferrochelatase, found in Coxiella burnetii (strain Dugway 5J108-111).